Reading from the N-terminus, the 486-residue chain is Cardiolipin synthase A (486 aa).

2 helical membrane passes run 3-23 (TVYT…IAGV) and 38-58 (MAWL…YLAV). PLD phosphodiesterase domains lie at 219–246 (MDLR…VDPR) and 399–426 (EGGL…DMRS). Residues histidine 224, lysine 226, aspartate 231, histidine 404, lysine 406, and aspartate 411 contribute to the active site.

This sequence belongs to the phospholipase D family. Cardiolipin synthase subfamily. ClsA sub-subfamily.

It localises to the cell inner membrane. The enzyme catalyses 2 a 1,2-diacyl-sn-glycero-3-phospho-(1'-sn-glycerol) = a cardiolipin + glycerol. In terms of biological role, catalyzes the reversible phosphatidyl group transfer from one phosphatidylglycerol molecule to another to form cardiolipin (CL) (diphosphatidylglycerol) and glycerol. This is Cardiolipin synthase A from Escherichia coli O7:K1 (strain IAI39 / ExPEC).